The sequence spans 881 residues: Glutamate--tRNA ligase (881 aa).

Positions 1–480 (MSVRVRLAPS…ILRFKKSIGQ (480 aa)) are glutamyl-tRNA synthetase. Residues 9–19 (PSPTGNLHIGT) carry the 'HIGH' region motif. The 'KMSKS' region signature appears at 248 to 252 (KLSKR). Lysine 251 provides a ligand contact to ATP. Residues 481 to 881 (EIEDTKIEDT…IKREIFGKPS (401 aa)) form a unknown region. Basic and acidic residues predominate over residues 488 to 502 (EDTKKAETTPHKSKG). A disordered region spans residues 488–747 (EDTKKAETTP…PTATDAETRE (260 aa)). The segment covering 522–548 (QTQTTKPPKKGQTATPVATTPTATDVT) has biased composition (low complexity). The span at 549 to 562 (ENTSVGTQETQSQI) shows a compositional bias: polar residues. Residues 563-576 (TTPVATTPTATDVT) show a composition bias toward low complexity. The span at 577–590 (ENTSVGTQETQSQI) shows a compositional bias: polar residues. Residues 591-604 (TTPVATTPTATDVT) show a composition bias toward low complexity. Over residues 605–618 (ENTSVETQETQSQI) the composition is skewed to polar residues. The span at 619–632 (TTPVATTPTATDVT) shows a compositional bias: low complexity. The segment covering 633–646 (ENTSVETQETQSQI) has biased composition (polar residues). Residues 647-660 (TTPVATTPTATDVT) are compositionally biased toward low complexity. The span at 661–674 (ENTSVGTQETQSQI) shows a compositional bias: polar residues. Residues 675 to 688 (TTPVATTPTATDVT) show a composition bias toward low complexity. The segment covering 689–702 (ENTSVETQETQSQI) has biased composition (polar residues). The segment covering 703–720 (TTPVATTSTATDVTENTS) has biased composition (low complexity). Residues 721–730 (VETQETQSQI) are compositionally biased toward polar residues. A compositionally biased stretch (low complexity) spans 731–742 (TTPVATTPTATD). 2 helical membrane passes run 809–829 (LFGW…VIEA) and 832–852 (GIPI…VWFV).

Belongs to the class-I aminoacyl-tRNA synthetase family. Glutamate--tRNA ligase type 1 subfamily. Monomer.

The protein resides in the cytoplasm. It is found in the cell membrane. The enzyme catalyses tRNA(Glu) + L-glutamate + ATP = L-glutamyl-tRNA(Glu) + AMP + diphosphate. Functionally, catalyzes the attachment of glutamate to tRNA(Glu) in a two-step reaction: glutamate is first activated by ATP to form Glu-AMP and then transferred to the acceptor end of tRNA(Glu). The polypeptide is Glutamate--tRNA ligase (gltX) (Trichodesmium erythraeum (strain IMS101)).